Reading from the N-terminus, the 345-residue chain is Endochitinase 4 (345 aa).

A signal peptide spans 1-27 (MAPLLNTGLVILPLIVSTLLGPMPAFA). Residues Asn-29 and Asn-89 are each glycosylated (N-linked (GlcNAc...) asparagine). In terms of domain architecture, GH18 spans 41–345 (KVLQGYWENW…TFGDNVKGRL (305 aa)). Residue Glu-163 is the Proton donor of the active site. Asn-316 carries N-linked (GlcNAc...) asparagine glycosylation.

The protein belongs to the glycosyl hydrolase 18 family. Chitinase class V subfamily.

It is found in the secreted. The enzyme catalyses Random endo-hydrolysis of N-acetyl-beta-D-glucosaminide (1-&gt;4)-beta-linkages in chitin and chitodextrins.. Its function is as follows. Secreted chitinase involved in the degradation of chitin, a component of the cell walls of fungi and exoskeletal elements of some animals (including worms and arthropods). Participates in the infection process and directly acts in the penetration process of the host cuticle. The sequence is that of Endochitinase 4 (chi4) from Metarhizium robertsii (strain ARSEF 23 / ATCC MYA-3075) (Metarhizium anisopliae (strain ARSEF 23)).